A 463-amino-acid polypeptide reads, in one-letter code: Phosphomethylpyrimidine synthase (463 aa).

Substrate contacts are provided by residues asparagine 80, methionine 109, tyrosine 138, histidine 173, 193–195, 234–237, and glutamate 273; these read SRG and DGLR. Histidine 277 provides a ligand contact to Zn(2+). Position 300 (tyrosine 300) interacts with substrate. Histidine 341 lines the Zn(2+) pocket. [4Fe-4S] cluster is bound by residues cysteine 421, cysteine 424, and cysteine 429.

It belongs to the ThiC family. As to quaternary structure, homodimer. [4Fe-4S] cluster serves as cofactor.

It carries out the reaction 5-amino-1-(5-phospho-beta-D-ribosyl)imidazole + S-adenosyl-L-methionine = 4-amino-2-methyl-5-(phosphooxymethyl)pyrimidine + CO + 5'-deoxyadenosine + formate + L-methionine + 3 H(+). The protein operates within cofactor biosynthesis; thiamine diphosphate biosynthesis. Its function is as follows. Catalyzes the synthesis of the hydroxymethylpyrimidine phosphate (HMP-P) moiety of thiamine from aminoimidazole ribotide (AIR) in a radical S-adenosyl-L-methionine (SAM)-dependent reaction. The chain is Phosphomethylpyrimidine synthase from Anaeromyxobacter dehalogenans (strain 2CP-1 / ATCC BAA-258).